Consider the following 517-residue polypeptide: Protein disulfide-isomerase A5 (517 aa).

Positions 1–21 (MARAWGLLLAIGVVLPTWLSS) are cleaved as a signal peptide. Disulfide bonds link Cys83/Cys92, Cys180/Cys183, Cys303/Cys306, and Cys424/Cys427. 3 consecutive Thioredoxin domains span residues 132-259 (FLKD…NPLP), 268-382 (PWAD…NPEA), and 376-504 (WMQN…TLRE). The short motif at 514–517 (REEL) is the Prevents secretion from ER element.

It belongs to the protein disulfide isomerase family. Interacts with CALR (via P-domain).

Its subcellular location is the endoplasmic reticulum lumen. It catalyses the reaction Catalyzes the rearrangement of -S-S- bonds in proteins.. The chain is Protein disulfide-isomerase A5 (Pdia5) from Mus musculus (Mouse).